The chain runs to 208 residues: N-(5'-phosphoribosyl)anthranilate isomerase (208 aa).

This sequence belongs to the TrpF family.

The enzyme catalyses N-(5-phospho-beta-D-ribosyl)anthranilate = 1-(2-carboxyphenylamino)-1-deoxy-D-ribulose 5-phosphate. It participates in amino-acid biosynthesis; L-tryptophan biosynthesis; L-tryptophan from chorismate: step 3/5. This chain is N-(5'-phosphoribosyl)anthranilate isomerase, found in Lactiplantibacillus plantarum (strain ATCC BAA-793 / NCIMB 8826 / WCFS1) (Lactobacillus plantarum).